The sequence spans 897 residues: MGASLPPKEANLFKLIVKSYETKQYKKGLKAADAILKKFPDHGETLSMKGLTLNCMDRKTEAYELVRLGVKNDIKSHVCWHVLGLLYRSDREYREAIKCYRNALRIDPDNLEILRDLSLLQAQMRDLSGFVETRQQLLTLKPNHRMNWIGFAVSQHLNANASKAVEILEAYEGTLEDDYPPENELIEHTEMILYKVSLLEESGSFDKALEELHKKEPKIVDKLSYKEQEVSLLSKVGRLEEANKLYRVLLSMNPDNYRYHEGLQKCLGLYSESGQYSSDQIEKLNALYQSLSEQYTRSSAVKRIPLDFLQDENFKEAVAKYIKPLLTKGVPSLFSDLSSLYDHPRKPDILEQLVVEMKHSIGTTGSFPGSDVKEPPSTLLWTLFFLAQHYDRRGQYDVALCKIDEAIAHTPTVIDLYSVKSRIMKHAGDLTAAAALADEARGMDLADRYINSECVKRMLQADQVPLAEKTAVLFTKEGDQLNNLHDMQCMWYDLASGDSYFRQGDLGRALKKFLAVEKHYADISEDQFDFHSYCLRKMTLRSYVDMLKFQDRLHSFPYFHKAAIRAIRCYLKLHDSPKSTAGEDEMSKLAPAQKKKIKKQKKAEARAKKEAESKSEESTASGASKSGKRNVKPVDPDPHGQKLIQVEEPMAEASKYLRLLQKHSPNSLETHLLSFEVNMRKQKFLLAFQAVKQLLKLGAENPDSHRSLVKFFLMTESISAPTTEAEKLRWRVLEAERPSISQLQNKSLMEANKEFLGRHEDSLVHRAAYAEMLYILDPSKKTEAIKIIEDSTNKVVQTNEALGQAREWKLKDCIAVHTLLDTVLLDSQAASRWKSRCAEYFPCSTHFEGKHCSLMPDSVYNSSRKSNENGDTPNHPMGQTELSDGQLEAFKSLSVAT.

TPR repeat units lie at residues 77-110, 111-144, 189-222, 223-256, 298-331, 380-413, and 488-523; these read HVCW…DPDN, LEIL…KPNH, TEMI…IVDK, LSYK…NPDN, SSAV…KGVP, LWTL…TPTV, and QCMW…YADI. Disordered regions lie at residues 578 to 640 and 863 to 897; these read KSTA…DPHG and SRKS…SVAT. Residues 602–617 show a composition bias toward basic and acidic residues; sequence KAEARAKKEAESKSEE. Positions 863-872 are enriched in polar residues; it reads SRKSNENGDT.

As to quaternary structure, part of the NatA complex. Associates with ribosomes. Interacts with NAA10. In terms of tissue distribution, expressed in leaves, roots, shoots and flowers.

Functionally, auxiliary subunit of the NatA N-alpha-acetyltransferase complex. Required for male gametocyte development, embryogenesis, suspensor development and the formation of the quiescent center (QC) in the root meristem. Involved in plant immunity through the regulation of SNC1 stability. Required for embryo development. The protein is N-terminal acetyltransferase A complex auxiliary subunit NAA15 of Arabidopsis thaliana (Mouse-ear cress).